Reading from the N-terminus, the 153-residue chain is Cytochrome c-554 (153 aa).

The signal sequence occupies residues 1-20 (MRPIPALALTFSLVAMPALA). Position 21 is a pyrrolidone carboxylic acid (Gln21). Heme c-binding residues include Met37, Cys142, Cys145, and His146.

Post-translationally, binds 1 heme c group covalently per subunit.

Its subcellular location is the periplasm. Functionally, monoheme c-type cytochrome, that is particularly expressed when cells generate energy via aerobic respiration. The chain is Cytochrome c-554 (cycF) from Cereibacter sphaeroides (strain ATCC 17023 / DSM 158 / JCM 6121 / CCUG 31486 / LMG 2827 / NBRC 12203 / NCIMB 8253 / ATH 2.4.1.) (Rhodobacter sphaeroides).